The following is a 1442-amino-acid chain: DNA-binding protein RFX7 (1442 aa).

Positions 1 to 36 (MEEEQQQQQQQQQAQKMQGTEQSAQLPPSAPGALPA) are disordered. The RFX-type winged-helix DNA-binding region spans 112-187 (AFSWIRNTLE…YCYSGLRKKA (76 aa)). A PxLPxI/L motif motif is present at residues 192 to 197 (PSLPNL). 3 disordered regions span residues 406-426 (MQSV…GDRS), 485-514 (SAGT…KNGS), and 929-1001 (SVTP…SVPP). Residues 935–947 (TPTPTPTPTPTLT) are compositionally biased toward pro residues. The segment covering 957–995 (GTQSLSRESPCSRLAQTTPVDSALGSSRHTPVGTPHSNC) has biased composition (polar residues).

This sequence belongs to the RFX family.

It localises to the nucleus. Transcription factor. Acts as a transcriptional activator by binding to promoter regions of target genes. Plays a role in natural killer (NK) cell maintenance and immunity. Plays a role in the process of ciliogenesis in the neural tube and neural tube closure by regulating the expression of RFX4. This is DNA-binding protein RFX7 from Xenopus laevis (African clawed frog).